Consider the following 168-residue polypeptide: Photosystem I assembly protein Ycf3 (168 aa).

TPR repeat units lie at residues 35 to 68 (AFTY…EIDP), 72 to 105 (SYIL…NPFL), and 120 to 153 (GEQA…TPGN).

Belongs to the Ycf3 family.

The protein localises to the plastid. It is found in the chloroplast thylakoid membrane. Its function is as follows. Essential for the assembly of the photosystem I (PSI) complex. May act as a chaperone-like factor to guide the assembly of the PSI subunits. The polypeptide is Photosystem I assembly protein Ycf3 (Solanum bulbocastanum (Wild potato)).